The primary structure comprises 495 residues: Tripartite motif-containing protein 5 (495 aa).

N-acetylalanine is present on Ala-2. The RING-type zinc finger occupies 15-60 (CPICLELLTEPLSLPCGHSFCQACITANHKKSMLYKEEERSCPVCR). Ser-87 is modified (phosphoserine). The B box-type zinc-finger motif lies at 92–133 (QKVDHCARHGEKLLLFCQEDRKVICWLCERSQEHRGHHTFLM). Zn(2+) contacts are provided by Cys-97, His-100, Cys-119, and His-125. Residues 137 to 177 (AQEYHVKLQTALEMLRQKQQEAEKLEADIREEKASWKIQID) are a coiled coil. A required for interaction with GABARAP and for autophagy region spans residues 187-200 (FEQLREILDWEESN). One can recognise a B30.2/SPRY domain in the interval 283 to 495 (LKGMLDMFRE…VPMTLCSPSS (213 aa)).

This sequence belongs to the TRIM/RBCC family. In terms of assembly, can form homodimers and homotrimers. In addition to lower-order dimerization, also exhibits a higher-order multimerization and both low- and high-order multimerizations are essential for its restriction activity. Interacts with BTBD1 and BTBD2. Interacts with PSMC4, PSMC5, PSMD7 and HSPA8/HSC70. Interacts (via B30.2/SPRY domain) with HSPA1A/B. Interacts with PSMC2, MAP3K7/TAK1, TAB2 and TAB3. Interacts with SQSTM1. Interacts with TRIM6 and TRIM34. Interacts with ULK1 (phosphorylated form), GABARAP, GABARAPL1, GABARAPL2, MAP1LC3A, MAP1LC3C and BECN1. Degraded in a proteasome-independent fashion in the absence of viral infection but in a proteasome-dependent fashion following exposure to restriction sensitive virus. Post-translationally, autoubiquitinated in a RING finger- and UBE2D2-dependent manner. Monoubiquitinated by TRIM21. Deubiquitinated by Yersinia YopJ. Ubiquitination may not lead to proteasomal degradation.

The protein resides in the cytoplasm. Its subcellular location is the nucleus. The catalysed reaction is S-ubiquitinyl-[E2 ubiquitin-conjugating enzyme]-L-cysteine + [acceptor protein]-L-lysine = [E2 ubiquitin-conjugating enzyme]-L-cysteine + N(6)-ubiquitinyl-[acceptor protein]-L-lysine.. It functions in the pathway protein modification; protein ubiquitination. In terms of biological role, capsid-specific restriction factor that prevents infection from non-host-adapted retroviruses. Blocks viral replication early in the life cycle, after viral entry but before reverse transcription. In addition to acting as a capsid-specific restriction factor, also acts as a pattern recognition receptor that activates innate immune signaling in response to the retroviral capsid lattice. Binding to the viral capsid triggers its E3 ubiquitin ligase activity, and in concert with the heterodimeric ubiquitin conjugating enzyme complex UBE2V1-UBE2N (also known as UBC13-UEV1A complex) generates 'Lys-63'-linked polyubiquitin chains, which in turn are catalysts in the autophosphorylation of the MAP3K7/TAK1 complex (includes TAK1, TAB2, and TAB3). Activation of the MAP3K7/TAK1 complex by autophosphorylation results in the induction and expression of NF-kappa-B and MAPK-responsive inflammatory genes, thereby leading to an innate immune response in the infected cell. Plays a role in regulating autophagy through activation of autophagy regulator BECN1 by causing its dissociation from its inhibitors BCL2 and TAB2. The protein is Tripartite motif-containing protein 5 (TRIM5) of Erythrocebus patas (Red guenon).